We begin with the raw amino-acid sequence, 83 residues long: Mu-theraphotoxin-Hhn2n (83 aa).

Positions Met-1 to Ala-21 are cleaved as a signal peptide. Positions Ser-22–Arg-48 are excised as a propeptide. Intrachain disulfides connect Cys-50–Cys-65, Cys-57–Cys-70, and Cys-64–Cys-77. Leu-81 carries the leucine amide modification.

Belongs to the neurotoxin 10 (Hwtx-1) family. 15 (Hntx-3) subfamily. As to quaternary structure, monomer. In terms of tissue distribution, expressed by the venom gland.

The protein localises to the secreted. Lethal neurotoxin. Selectively blocks tetrodotoxin-sensitive voltage-gated sodium channels (Nav). Does not affect tetrodotoxin-resistant voltage-gated sodium channels or calcium channels. This chain is Mu-theraphotoxin-Hhn2n, found in Cyriopagopus hainanus (Chinese bird spider).